A 325-amino-acid chain; its full sequence is tRNA dimethylallyltransferase (325 aa).

Glycine 12–threonine 19 lines the ATP pocket. A substrate-binding site is contributed by threonine 14–threonine 19. 3 interaction with substrate tRNA regions span residues aspartate 37 to leucine 40, glutamine 161 to arginine 165, and arginine 244 to arginine 249.

It belongs to the IPP transferase family. Monomer. Requires Mg(2+) as cofactor.

The enzyme catalyses adenosine(37) in tRNA + dimethylallyl diphosphate = N(6)-dimethylallyladenosine(37) in tRNA + diphosphate. In terms of biological role, catalyzes the transfer of a dimethylallyl group onto the adenine at position 37 in tRNAs that read codons beginning with uridine, leading to the formation of N6-(dimethylallyl)adenosine (i(6)A). This Chromobacterium violaceum (strain ATCC 12472 / DSM 30191 / JCM 1249 / CCUG 213 / NBRC 12614 / NCIMB 9131 / NCTC 9757 / MK) protein is tRNA dimethylallyltransferase.